The following is a 458-amino-acid chain: Adenylosuccinate synthetase (458 aa).

GTP contacts are provided by residues 17–23 (GDEGKGK) and 45–47 (GHT). The Proton acceptor role is filled by D18. Residues D18 and G45 each contribute to the Mg(2+) site. IMP is bound by residues 18-21 (DEGK), 43-46 (NAGH), T137, R151, Q247, T262, and R330. H46 acts as the Proton donor in catalysis. 326-332 (VTTGRSR) serves as a coordination point for substrate. GTP is bound by residues R332, 358-360 (KLD), and 440-442 (STS).

The protein belongs to the adenylosuccinate synthetase family. As to quaternary structure, homodimer. The cofactor is Mg(2+).

The protein localises to the cytoplasm. It carries out the reaction IMP + L-aspartate + GTP = N(6)-(1,2-dicarboxyethyl)-AMP + GDP + phosphate + 2 H(+). It participates in purine metabolism; AMP biosynthesis via de novo pathway; AMP from IMP: step 1/2. In terms of biological role, plays an important role in the de novo pathway of purine nucleotide biosynthesis. Catalyzes the first committed step in the biosynthesis of AMP from IMP. This Acidovorax ebreus (strain TPSY) (Diaphorobacter sp. (strain TPSY)) protein is Adenylosuccinate synthetase.